Here is a 124-residue protein sequence, read N- to C-terminus: Large ribosomal subunit protein bL12 (124 aa).

Belongs to the bacterial ribosomal protein bL12 family. As to quaternary structure, homodimer. Part of the ribosomal stalk of the 50S ribosomal subunit. Forms a multimeric L10(L12)X complex, where L10 forms an elongated spine to which 2 to 4 L12 dimers bind in a sequential fashion. Binds GTP-bound translation factors.

Its function is as follows. Forms part of the ribosomal stalk which helps the ribosome interact with GTP-bound translation factors. Is thus essential for accurate translation. In Cupriavidus pinatubonensis (strain JMP 134 / LMG 1197) (Cupriavidus necator (strain JMP 134)), this protein is Large ribosomal subunit protein bL12.